A 380-amino-acid polypeptide reads, in one-letter code: Probable inactive reductase easA (380 aa).

FMN-binding positions include 25–27 (PMT), A60, Q102, and H171. Substrate contacts are provided by H171 and N174. Residues K223, G299, 324-325 (GR), and R325 contribute to the FMN site. Y352 contacts substrate.

The protein belongs to the NADH:flavin oxidoreductase/NADH oxidase family.

Functionally, probable inactive dehydrogenase; part of the gene cluster that mediates the biosynthesis of fungal ergot alkaloid ergovaline, the predominant ergopeptine product in E.festucae var. lolii. DmaW catalyzes the first step of ergot alkaloid biosynthesis by condensing dimethylallyl diphosphate (DMAP) and tryptophan to form 4-dimethylallyl-L-tryptophan. The second step is catalyzed by the methyltransferase easF that methylates 4-dimethylallyl-L-tryptophan in the presence of S-adenosyl-L-methionine, resulting in the formation of 4-dimethylallyl-L-abrine. The catalase easC and the FAD-dependent oxidoreductase easE then transform 4-dimethylallyl-L-abrine to chanoclavine-I which is further oxidized by easD in the presence of NAD(+), resulting in the formation of chanoclavine-I aldehyde. Agroclavine dehydrogenase easG then mediates the conversion of chanoclavine-I aldehyde to agroclavine via a non-enzymatic adduct reaction: the substrate is an iminium intermediate that is formed spontaneously from chanoclavine-I aldehyde in the presence of glutathione. The presence of easA is not required to complete this reaction. Further conversion of agroclavine to paspalic acid is a two-step process involving oxidation of agroclavine to elymoclavine and of elymoclavine to paspalic acid, the second step being performed by the elymoclavine oxidase cloA. Paspalic acid is then further converted to D-lysergic acid. Ergovaline is assembled from D-lysergic acid and three different amino acids by the D-lysergyl-peptide-synthetase composed of a monomudular (lpsB) and a trimodular (lpsA) nonribosomal peptide synthetase subunit. The sequence is that of Probable inactive reductase easA from Epichloe festucae var. lolii (Neotyphodium lolii).